The chain runs to 70 residues: Conotoxin elongated-tx3a-a (70 aa).

An N-terminal signal peptide occupies residues 1 to 24 (MLKMGVVLFIFLVLFPLATLQLDA). Residues 25 to 44 (DQPVERYAENKQLLSPDERR) constitute a propeptide that is removed on maturation. Cystine bridges form between Cys55–Cys68, Cys56–Cys66, and Cys61–Cys69. A 6'-bromotryptophan; partial modification is found at Trp58. Position 69 is a cysteine amide; partial (Cys69).

This sequence belongs to the conotoxin M superfamily. Post-translationally, two short peptides are produced from this precursor; Conotoxin tx3a-b is amidated at Cys-69 (but has no bromotryptophan), whereas conotoxin tx3a-a has an unmodified Gly-70 and a bromotryptophan. Two elongated peptides are also produced; Conotoxin elongated-tx3a-b is amidated at Cys-69 (but has no bromotryptophan), whereas conotoxin elongated tx3a-a has an unmodified Gly-70 (but has no bromotryptophan). In terms of processing, ju et al. (2022) describe a disulfide connectivity (C55-C61; C56-C69; C66-C68) that differs from that of Han and colleagues (2006), McDougal et al. (2008), and Ueberheide et al. (2009). In terms of tissue distribution, expressed by the venom duct. Is present in all duct parts with a highest content in part 2 (proximal of the venom bulb) and then decreases in concentration toward the end of the duct.

The protein resides in the secreted. In terms of biological role, intracranial injection into mice causes scratching and hyperactivity. In vitro, inhibits proliferation of the mice ovarian cancer cells ID8. The polypeptide is Conotoxin elongated-tx3a-a (Conus textile (Cloth-of-gold cone)).